Consider the following 176-residue polypeptide: Ribosome maturation factor RimM (176 aa).

In terms of domain architecture, PRC barrel spans 101 to 174; sequence EGHYYIYQLL…EIRVELPPGL (74 aa).

The protein belongs to the RimM family. In terms of assembly, binds ribosomal protein uS19.

The protein localises to the cytoplasm. In terms of biological role, an accessory protein needed during the final step in the assembly of 30S ribosomal subunit, possibly for assembly of the head region. Essential for efficient processing of 16S rRNA. May be needed both before and after RbfA during the maturation of 16S rRNA. It has affinity for free ribosomal 30S subunits but not for 70S ribosomes. In Moorella thermoacetica (strain ATCC 39073 / JCM 9320), this protein is Ribosome maturation factor RimM.